The sequence spans 550 residues: Methyl-coenzyme M reductase subunit alpha (550 aa).

Q147 is a coenzyme F430 binding site. Coenzyme B is bound by residues R225, K256–H257, and R270. Residue H257 is modified to Pros-methylhistidine. The residue at position 271 (R271) is a 5-methylarginine. Residue Y333 participates in coenzyme M binding. Q400 carries the post-translational modification 2-methylglutamine. Position 444 (Y444) interacts with coenzyme M. G445 is subject to 1-thioglycine. D450 carries the (Z)-2,3-didehydroaspartate modification. C452 carries the post-translational modification S-methylcysteine.

The protein belongs to the methyl-coenzyme M reductase alpha subunit family. As to quaternary structure, MCR is a hexamer of two alpha, two beta, and two gamma chains, forming a dimer of heterotrimers. Requires coenzyme F430 as cofactor. Post-translationally, the alpha subunit contains six modified amino acids near the active site region. Is methylated on His-257, Arg-271, Gln-400 and Cys-452, probably by the action of specific S-adenosylmethionine-dependent methyltransferases. Also contains a thioglycine at position 445, forming a thiopeptide bond. Contains a didehydroaspartate residue at position 450. The methylation on C5 of Arg-271 is a post-translational methylation not essential in vivo, but which plays a role for the stability and structural integrity of MCR.

The protein localises to the cytoplasm. The catalysed reaction is coenzyme B + methyl-coenzyme M = methane + coenzyme M-coenzyme B heterodisulfide. It functions in the pathway one-carbon metabolism; methyl-coenzyme M reduction; methane from methyl-coenzyme M: step 1/1. Its function is as follows. Component of the methyl-coenzyme M reductase (MCR) I that catalyzes the reductive cleavage of methyl-coenzyme M (CoM-S-CH3 or 2-(methylthio)ethanesulfonate) using coenzyme B (CoB or 7-mercaptoheptanoylthreonine phosphate) as reductant which results in the production of methane and the mixed heterodisulfide of CoB and CoM (CoM-S-S-CoB). This is the final step in methanogenesis. This chain is Methyl-coenzyme M reductase subunit alpha (mcrA), found in Methanothermobacter thermautotrophicus (strain ATCC 29096 / DSM 1053 / JCM 10044 / NBRC 100330 / Delta H) (Methanobacterium thermoautotrophicum).